We begin with the raw amino-acid sequence, 256 residues long: Necrosis-inducing protein NPP1 (256 aa).

The Conserved undecapeptide motif signature appears at 111-121 (AIMYAWYFPKG). Residues 133–139 (GHRHEWE) carry the Conserved heptapeptide motif motif.

This sequence belongs to the Necrosis inducing protein (NPP1) family.

It is found in the secreted. In terms of biological role, secreted effector that acts as a pathogen-associated molecular pattern (PAMP) recognized by the plant immune system. The sequence is that of Necrosis-inducing protein NPP1 from Phytophthora cinnamomi (Cinnamon fungus).